We begin with the raw amino-acid sequence, 108 residues long: UPF0060 membrane protein YnfA (108 aa).

The Periplasmic portion of the chain corresponds to 1 to 5 (MIKTT). Residues 6–26 (LLFFATALCEIIGCFLPWLWL) form a helical membrane-spanning segment. The Cytoplasmic segment spans residues 27-30 (KRNA). The chain crosses the membrane as a helical span at residues 31–51 (SIWLLLPAGISLALFVWLLTL). The Periplasmic segment spans residues 52-60 (HPAASGRVY). The chain crosses the membrane as a helical span at residues 61–81 (AAYGGVYVCTALIWLRVVDGV). Residues 82 to 84 (KLS) lie on the Cytoplasmic side of the membrane. A helical membrane pass occupies residues 85–105 (LYDWTGALIALCGMLIIVAGW). At 106 to 108 (GRT) the chain is on the periplasmic side.

This sequence belongs to the UPF0060 family.

The protein resides in the cell inner membrane. This Escherichia coli (strain SMS-3-5 / SECEC) protein is UPF0060 membrane protein YnfA.